A 432-amino-acid chain; its full sequence is Delta-aminolevulinic acid dehydratase, chloroplastic (432 aa).

The tract at residues 84-113 is disordered; it reads AAPPVPAKPSAPEGTPAISPLVMPARPRRN. The active-site Schiff-base intermediate with substrate is Lys-300. 5-aminolevulinate is bound by residues Arg-310 and Lys-322. Glu-338 serves as a coordination point for Mg(2+). Residue Lys-353 is the Schiff-base intermediate with substrate of the active site. Residues Ser-379 and Tyr-418 each contribute to the 5-aminolevulinate site.

The protein belongs to the ALAD family. In terms of assembly, homooctamer. Mg(2+) serves as cofactor.

Its subcellular location is the plastid. It is found in the chloroplast. The enzyme catalyses 2 5-aminolevulinate = porphobilinogen + 2 H2O + H(+). It functions in the pathway porphyrin-containing compound metabolism; protoporphyrin-IX biosynthesis; coproporphyrinogen-III from 5-aminolevulinate: step 1/4. Catalyzes an early step in the biosynthesis of tetrapyrroles. Binds two molecules of 5-aminolevulinate per subunit, each at a distinct site, and catalyzes their condensation to form porphobilinogen. In Physcomitrium patens (Spreading-leaved earth moss), this protein is Delta-aminolevulinic acid dehydratase, chloroplastic (HEMB).